We begin with the raw amino-acid sequence, 308 residues long: Isochorismatase domain-containing protein 1 (308 aa).

It belongs to the isochorismatase family.

In Xenopus tropicalis (Western clawed frog), this protein is Isochorismatase domain-containing protein 1 (isoc1).